A 378-amino-acid chain; its full sequence is Stimulator of interferon genes protein (378 aa).

The next 2 helical transmembrane spans lie at 21–41 and 46–66; these read AAFV…EPAD and WLVL…LCSL. S-palmitoyl cysteine attachment occurs at residues C88 and C91. 2 helical membrane-spanning segments follow: residues 89 to 109 and 114 to 134; these read LGCP…YTFL and GLPF…NILL. Residues 153–339 are cyclic dinucleotide-binding domain (CBD); the sequence is FNVAHGLAWS…KHLKQEEKEE (187 aa). 2',3'-cGAMP contacts are provided by S162, Y167, R238, and T263. 3',3'-c-di-GMP is bound by residues S162, Y167, 238-241, and T263; that span reads RVYT. The 2',3'-cUAMP site is built by Y167, R238, and T263. Residues 339–378 are C-terminal tail (CTT); the sequence is EVTVGTMGSSGVLESSTLDKEPQLLISGMDQPLPLRTDVF. S354 is subject to Phosphoserine. T355 bears the Phosphothreonine mark. The pLxIS motif motif lies at 362–365; the sequence is LLIS. The residue at position 365 (S365) is a Phosphoserine; by TBK1.

The protein belongs to the STING family. In terms of assembly, homodimer; forms a homodimer in absence of cyclic nucleotide (c-di-GMP or cGAMP). Homotetramer; in presence of cyclic nucleotide (c-di-GMP or cGAMP), forms tetramers and higher-order oligomers through side-by-side packing. Interacts (when phosphorylated) with IRF3; following activation and phosphorylation on the pLxIS motif by TBK1, recruits IRF3. Interacts with TBK1; when homodimer, leading to subsequent production of IFN-beta. Phosphorylation by TBK1 leads to activation and production of IFN-beta. Following cyclic nucleotide (c-di-GMP or cGAMP)-binding, activation and translocation from the endoplasmic reticulum, STING1 is phosphorylated by TBK1 at Ser-365 in the pLxIS motif. The phosphorylated pLxIS motif constitutes an IRF3-binding motif, leading to recruitment of the transcription factor IRF3 to induce type-I interferons and other cytokines. In contrast, lacks phosphorylation site at position 357, leading to reduced production of type-I interferons and other cytokines.

The protein resides in the endoplasmic reticulum membrane. Its subcellular location is the cytoplasm. The protein localises to the perinuclear region. It localises to the endoplasmic reticulum-Golgi intermediate compartment membrane. It is found in the golgi apparatus membrane. The protein resides in the cytoplasmic vesicle. Its subcellular location is the autophagosome membrane. The protein localises to the mitochondrion outer membrane. It localises to the cell membrane. It carries out the reaction H(+)(in) = H(+)(out). In terms of biological role, facilitator of innate immune signaling that acts as a sensor of cytosolic DNA from bacteria and viruses and promotes low production of type I interferon (IFN-alpha and IFN-beta). Compared to other mammals, STING1-dependent type I interferon induction is strongly reduced in bats, suggesting that the cGAS-STING pathway promotes a limited inflammatory response. Innate immune response is triggered in response to non-CpG double-stranded DNA from viruses and bacteria delivered to the cytoplasm. Acts by binding cyclic dinucleotides: recognizes and binds cyclic di-GMP (c-di-GMP), a second messenger produced by bacteria, cyclic UMP-AMP (2',3'-cUAMP), and cyclic GMP-AMP (cGAMP), a messenger produced by CGAS in response to DNA virus in the cytosol. Upon binding to c-di-GMP, cUAMP or cGAMP, STING1 oligomerizes, translocates from the endoplasmic reticulum and is phosphorylated by TBK1 on the pLxIS motif, leading to recruitment and subsequent activation of the transcription factor IRF3 to induce expression of type I interferon and exert a potent anti-viral state. In addition to promote the production of type I interferons, plays a direct role in autophagy. Following cGAMP-binding, STING1 buds from the endoplasmic reticulum into COPII vesicles, which then form the endoplasmic reticulum-Golgi intermediate compartment (ERGIC). The ERGIC serves as the membrane source for WIPI2 recruitment and LC3 lipidation, leading to formation of autophagosomes that target cytosolic DNA or DNA viruses for degradation by the lysosome. Promotes autophagy by acting as a proton channel that directs proton efflux from the Golgi to facilitate MAP1LC3B/LC3B lipidation. The autophagy- and interferon-inducing activities can be uncoupled and autophagy induction is independent of TBK1 phosphorylation. In Rhinolophus ferrumequinum (Greater horseshoe bat), this protein is Stimulator of interferon genes protein.